The chain runs to 368 residues: UDP-N-acetylglucosamine--N-acetylmuramyl-(pentapeptide) pyrophosphoryl-undecaprenol N-acetylglucosamine transferase (368 aa).

Residues 13 to 15, Asn127, Arg168, Ser200, Ile254, and Gln299 contribute to the UDP-N-acetyl-alpha-D-glucosamine site; that span reads TGG.

Belongs to the glycosyltransferase 28 family. MurG subfamily.

The protein resides in the cell inner membrane. It catalyses the reaction di-trans,octa-cis-undecaprenyl diphospho-N-acetyl-alpha-D-muramoyl-L-alanyl-D-glutamyl-meso-2,6-diaminopimeloyl-D-alanyl-D-alanine + UDP-N-acetyl-alpha-D-glucosamine = di-trans,octa-cis-undecaprenyl diphospho-[N-acetyl-alpha-D-glucosaminyl-(1-&gt;4)]-N-acetyl-alpha-D-muramoyl-L-alanyl-D-glutamyl-meso-2,6-diaminopimeloyl-D-alanyl-D-alanine + UDP + H(+). The protein operates within cell wall biogenesis; peptidoglycan biosynthesis. In terms of biological role, cell wall formation. Catalyzes the transfer of a GlcNAc subunit on undecaprenyl-pyrophosphoryl-MurNAc-pentapeptide (lipid intermediate I) to form undecaprenyl-pyrophosphoryl-MurNAc-(pentapeptide)GlcNAc (lipid intermediate II). In Parabacteroides distasonis (strain ATCC 8503 / DSM 20701 / CIP 104284 / JCM 5825 / NCTC 11152), this protein is UDP-N-acetylglucosamine--N-acetylmuramyl-(pentapeptide) pyrophosphoryl-undecaprenol N-acetylglucosamine transferase.